The chain runs to 378 residues: Alcohol dehydrogenase class-3 (378 aa).

At Ala-1 the chain carries N-acetylalanine. Cys-46 contacts Zn(2+). Position 47 (His-47) interacts with NAD(+). An alcohol-binding residues include Thr-48 and His-68. 7 residues coordinate Zn(2+): His-68, Glu-69, Cys-98, Cys-101, Cys-104, Cys-112, and Cys-176. Residues 201–206, Asp-225, Lys-230, 294–296, 319–321, and Arg-371 contribute to the NAD(+) site; these read GLGTVG, VGV, and TAF.

It belongs to the zinc-containing alcohol dehydrogenase family. Class-III subfamily. Homodimer. It depends on Zn(2+) as a cofactor.

It localises to the cytoplasm. It carries out the reaction a primary alcohol + NAD(+) = an aldehyde + NADH + H(+). The enzyme catalyses a secondary alcohol + NAD(+) = a ketone + NADH + H(+). It catalyses the reaction S-(hydroxymethyl)glutathione + NADP(+) = S-formylglutathione + NADPH + H(+). The catalysed reaction is S-(hydroxymethyl)glutathione + NAD(+) = S-formylglutathione + NADH + H(+). Class-III ADH is remarkably ineffective in oxidizing ethanol, but it readily catalyzes the oxidation of long-chain primary alcohols and the oxidation of S-(hydroxymethyl) glutathione. The chain is Alcohol dehydrogenase class-3 from Pisum sativum (Garden pea).